Reading from the N-terminus, the 154-residue chain is Ecotin-like protein 2 (154 aa).

The protein belongs to the protease inhibitor I11 (ecotin) family.

In Trypanosoma brucei brucei (strain 927/4 GUTat10.1), this protein is Ecotin-like protein 2.